Consider the following 188-residue polypeptide: Ion-translocating oxidoreductase complex subunit B (188 aa).

Positions 1–26 are hydrophobic; that stretch reads MNGVFLAIGALLPICLAGGALLGYAA. Residues 32 to 90 enclose the 4Fe-4S domain; sequence QGDPVAEQVNALLPQTQCGQCGYPGCKPYAEAIAAGDKINKCPPGGEATIRALADLLDL. [4Fe-4S] cluster is bound by residues Cys-49, Cys-52, Cys-57, Cys-73, Cys-113, Cys-116, Cys-119, Cys-123, Cys-143, Cys-146, Cys-149, and Cys-153. 4Fe-4S ferredoxin-type domains lie at 104 to 133 and 134 to 163; these read RVAYIREAECIGCTKCIQACPVDAIVGAAR and LMHTVIADECTGCDLCLEPCPVDCIEMREI.

It belongs to the 4Fe4S bacterial-type ferredoxin family. RnfB subfamily. In terms of assembly, the complex is composed of six subunits: RnfA, RnfB, RnfC, RnfD, RnfE and RnfG. It depends on [4Fe-4S] cluster as a cofactor.

It localises to the cell inner membrane. Functionally, part of a membrane-bound complex that couples electron transfer with translocation of ions across the membrane. The polypeptide is Ion-translocating oxidoreductase complex subunit B (Pseudomonas aeruginosa (strain LESB58)).